The chain runs to 371 residues: UDP-N-acetylglucosamine--N-acetylmuramyl-(pentapeptide) pyrophosphoryl-undecaprenol N-acetylglucosamine transferase (371 aa).

UDP-N-acetyl-alpha-D-glucosamine-binding positions include 10-12, Asn122, Arg166, Ser196, and Gln301; that span reads TGG.

This sequence belongs to the glycosyltransferase 28 family. MurG subfamily.

It is found in the cell inner membrane. The enzyme catalyses di-trans,octa-cis-undecaprenyl diphospho-N-acetyl-alpha-D-muramoyl-L-alanyl-D-glutamyl-meso-2,6-diaminopimeloyl-D-alanyl-D-alanine + UDP-N-acetyl-alpha-D-glucosamine = di-trans,octa-cis-undecaprenyl diphospho-[N-acetyl-alpha-D-glucosaminyl-(1-&gt;4)]-N-acetyl-alpha-D-muramoyl-L-alanyl-D-glutamyl-meso-2,6-diaminopimeloyl-D-alanyl-D-alanine + UDP + H(+). It functions in the pathway cell wall biogenesis; peptidoglycan biosynthesis. Cell wall formation. Catalyzes the transfer of a GlcNAc subunit on undecaprenyl-pyrophosphoryl-MurNAc-pentapeptide (lipid intermediate I) to form undecaprenyl-pyrophosphoryl-MurNAc-(pentapeptide)GlcNAc (lipid intermediate II). The chain is UDP-N-acetylglucosamine--N-acetylmuramyl-(pentapeptide) pyrophosphoryl-undecaprenol N-acetylglucosamine transferase from Halothermothrix orenii (strain H 168 / OCM 544 / DSM 9562).